Reading from the N-terminus, the 426-residue chain is Dihydroorotase (426 aa).

His62 and His64 together coordinate Zn(2+). Substrate contacts are provided by residues 64 to 66 and Asn96; that span reads HLR. The Zn(2+) site is built by Asp154, His181, His234, and Asp307. Asp307 is a catalytic residue. Residue His311 coordinates substrate.

This sequence belongs to the metallo-dependent hydrolases superfamily. DHOase family. Class I DHOase subfamily. It depends on Zn(2+) as a cofactor.

The catalysed reaction is (S)-dihydroorotate + H2O = N-carbamoyl-L-aspartate + H(+). Its pathway is pyrimidine metabolism; UMP biosynthesis via de novo pathway; (S)-dihydroorotate from bicarbonate: step 3/3. In terms of biological role, catalyzes the reversible cyclization of carbamoyl aspartate to dihydroorotate. The sequence is that of Dihydroorotase from Syntrophus aciditrophicus (strain SB).